We begin with the raw amino-acid sequence, 247 residues long: Sortase A (247 aa).

Residues 1 to 9 lie on the Cytoplasmic side of the membrane; the sequence is MRNKKKLHG. A helical transmembrane segment spans residues 10–30; sequence FFNFVRWLLVVLLIIVGLALV. The Extracellular portion of the chain corresponds to 31–247; sequence FNKPIRNAFI…FSKKYNQINL (217 aa). Histidine 140 acts as the Proton donor/acceptor in catalysis. Cysteine 206 acts as the Acyl-thioester intermediate in catalysis.

This sequence belongs to the bacterial sortase family. Class A subfamily.

The protein resides in the cell membrane. Its function is as follows. Transpeptidase that anchors surface proteins to the cell wall. Recognizes and modifies its substrate by proteolytic cleavage of a C-terminal sorting signal. Following cleavage, a covalent intermediate is formed via a thioester bond between the sortase and its substrate, which is then transferred and covalently attached to the cell wall. This sortase recognizes a Leu-Pro-x-Thr-Gly (LPXTG) motif, which is cleaved by the sortase between the threonine and glycine residues. Essential for adherence to eukaryotic cells and for binding to fibronectin and fibrinogen. The protein is Sortase A of Streptococcus agalactiae serotype III (strain NEM316).